Consider the following 222-residue polypeptide: tRNA (guanine-N(1)-)-methyltransferase (222 aa).

S-adenosyl-L-methionine-binding positions include Gly-111 and Leu-131 to Ile-136.

Belongs to the RNA methyltransferase TrmD family. As to quaternary structure, homodimer.

The protein localises to the cytoplasm. The catalysed reaction is guanosine(37) in tRNA + S-adenosyl-L-methionine = N(1)-methylguanosine(37) in tRNA + S-adenosyl-L-homocysteine + H(+). In terms of biological role, specifically methylates guanosine-37 in various tRNAs. The protein is tRNA (guanine-N(1)-)-methyltransferase of Leptospira borgpetersenii serovar Hardjo-bovis (strain JB197).